Here is a 2020-residue protein sequence, read N- to C-terminus: Metacaspase-2 (2020 aa).

Composition is skewed to basic and acidic residues over residues 51–60 and 69–78; these read SENDRNESIQ and DNRKTNKSEK. 2 disordered regions span residues 51-78 and 573-614; these read SEND…KSEK and RNGN…NINN. Residues 576 to 614 are compositionally biased toward low complexity; the sequence is NINNNKNNNINNNNNNINNNNNNINNNNNNINNNNNINN.

Belongs to the peptidase C14B family.

It is found in the cytoplasm. Ca(2+) does not appear to affect catalytic activity. Protease that cleaves specifically after arginine or lysine residues. May play a role in parasite growth and/or development. This Plasmodium falciparum (isolate 3D7) protein is Metacaspase-2.